A 143-amino-acid polypeptide reads, in one-letter code: Sporulation-specific protein 73 (143 aa).

The protein belongs to the SPO73 family. As to quaternary structure, interacts with SPO71.

The protein resides in the cytoplasm. Its subcellular location is the prospore membrane. Functionally, required for spore wall assembly and ascus formation. Involved in the formation and elongation of prospore membranes. The polypeptide is Sporulation-specific protein 73 (Saccharomyces cerevisiae (strain ATCC 204508 / S288c) (Baker's yeast)).